The following is a 526-amino-acid chain: Putative D-lactate dehydrogenase C713.03, mitochondrial (526 aa).

The region spanning 93-272 (YRGKTQLALK…TKLSVICPKR (180 aa)) is the FAD-binding PCMH-type domain.

Belongs to the FAD-binding oxidoreductase/transferase type 4 family. It depends on FAD as a cofactor.

It localises to the mitochondrion matrix. The enzyme catalyses (R)-lactate + 2 Fe(III)-[cytochrome c] = 2 Fe(II)-[cytochrome c] + pyruvate + 2 H(+). The protein is Putative D-lactate dehydrogenase C713.03, mitochondrial of Schizosaccharomyces pombe (strain 972 / ATCC 24843) (Fission yeast).